The following is a 523-amino-acid chain: DNA primase (523 aa).

The CHC2-type zinc finger occupies 37 to 61 (CPFHAEKTPSFFVNPLQGYFYCFGC). A Toprim domain is found at 259–340 (KSVILVEGYI…NVSVVRMDFG (82 aa)). The Mg(2+) site is built by glutamate 265, aspartate 309, and aspartate 311.

Belongs to the DnaG primase family. As to quaternary structure, monomer. Interacts with DnaB. It depends on Zn(2+) as a cofactor. Mg(2+) serves as cofactor.

The catalysed reaction is ssDNA + n NTP = ssDNA/pppN(pN)n-1 hybrid + (n-1) diphosphate.. Functionally, RNA polymerase that catalyzes the synthesis of short RNA molecules used as primers for DNA polymerase during DNA replication. The sequence is that of DNA primase from Borreliella burgdorferi (strain ATCC 35210 / DSM 4680 / CIP 102532 / B31) (Borrelia burgdorferi).